The following is a 206-amino-acid chain: 3-isopropylmalate dehydratase small subunit (206 aa).

The protein belongs to the LeuD family. LeuD type 1 subfamily. As to quaternary structure, heterodimer of LeuC and LeuD.

It catalyses the reaction (2R,3S)-3-isopropylmalate = (2S)-2-isopropylmalate. It participates in amino-acid biosynthesis; L-leucine biosynthesis; L-leucine from 3-methyl-2-oxobutanoate: step 2/4. Functionally, catalyzes the isomerization between 2-isopropylmalate and 3-isopropylmalate, via the formation of 2-isopropylmaleate. The chain is 3-isopropylmalate dehydratase small subunit from Leptospira borgpetersenii serovar Hardjo-bovis (strain JB197).